The following is a 93-amino-acid chain: Acylphosphatase (93 aa).

Residues 5–93 (TAILRVTGFV…EERKTFDIVY (89 aa)) form the Acylphosphatase-like domain. Active-site residues include Arg-20 and Asn-38.

The protein belongs to the acylphosphatase family.

The catalysed reaction is an acyl phosphate + H2O = a carboxylate + phosphate + H(+). The protein is Acylphosphatase (acyP) of Listeria monocytogenes serotype 4b (strain F2365).